We begin with the raw amino-acid sequence, 525 residues long: GMP synthase [glutamine-hydrolyzing] (525 aa).

Residues 9–202 (SILIIDFGSQ…VHKIVGLKSD (194 aa)) enclose the Glutamine amidotransferase type-1 domain. Cysteine 86 functions as the Nucleophile in the catalytic mechanism. Catalysis depends on residues histidine 176 and glutamate 178. The 198-residue stretch at 203–400 (WTMAAYRAEM…LGLPESFIGR (198 aa)) folds into the GMPS ATP-PPase domain. 230 to 236 (SGGVDSS) serves as a coordination point for ATP.

Homodimer.

The enzyme catalyses XMP + L-glutamine + ATP + H2O = GMP + L-glutamate + AMP + diphosphate + 2 H(+). It participates in purine metabolism; GMP biosynthesis; GMP from XMP (L-Gln route): step 1/1. Its function is as follows. Catalyzes the synthesis of GMP from XMP. The polypeptide is GMP synthase [glutamine-hydrolyzing] (Agrobacterium fabrum (strain C58 / ATCC 33970) (Agrobacterium tumefaciens (strain C58))).